A 318-amino-acid polypeptide reads, in one-letter code: Acetyl-coenzyme A carboxylase carboxyl transferase subunit alpha (318 aa).

A CoA carboxyltransferase C-terminal domain is found at 38–292 (KLEKRLAKLE…NKTITKSLHA (255 aa)).

It belongs to the AccA family. Acetyl-CoA carboxylase is a heterohexamer composed of biotin carboxyl carrier protein (AccB), biotin carboxylase (AccC) and two subunits each of ACCase subunit alpha (AccA) and ACCase subunit beta (AccD).

It is found in the cytoplasm. It carries out the reaction N(6)-carboxybiotinyl-L-lysyl-[protein] + acetyl-CoA = N(6)-biotinyl-L-lysyl-[protein] + malonyl-CoA. The protein operates within lipid metabolism; malonyl-CoA biosynthesis; malonyl-CoA from acetyl-CoA: step 1/1. Component of the acetyl coenzyme A carboxylase (ACC) complex. First, biotin carboxylase catalyzes the carboxylation of biotin on its carrier protein (BCCP) and then the CO(2) group is transferred by the carboxyltransferase to acetyl-CoA to form malonyl-CoA. This is Acetyl-coenzyme A carboxylase carboxyl transferase subunit alpha from Listeria innocua serovar 6a (strain ATCC BAA-680 / CLIP 11262).